The chain runs to 76 residues: Small ribosomal subunit protein bS18 (76 aa).

The protein belongs to the bacterial ribosomal protein bS18 family. In terms of assembly, part of the 30S ribosomal subunit. Forms a tight heterodimer with protein bS6.

Binds as a heterodimer with protein bS6 to the central domain of the 16S rRNA, where it helps stabilize the platform of the 30S subunit. The polypeptide is Small ribosomal subunit protein bS18 (Symbiobacterium thermophilum (strain DSM 24528 / JCM 14929 / IAM 14863 / T)).